Here is a 219-residue protein sequence, read N- to C-terminus: UPF0502 protein HCH_06091 (219 aa).

Belongs to the UPF0502 family.

This is UPF0502 protein HCH_06091 from Hahella chejuensis (strain KCTC 2396).